We begin with the raw amino-acid sequence, 320 residues long: Serpentine receptor class delta-40 (320 aa).

7 helical membrane passes run 12–32 (IFYPIFFIFSTITQLMLIYLI), 42–62 (MLKVFLLNTSLFQIILVVVSC), 95–115 (YQVLQTSAFMSGMSILITFVF), 133–153 (IILLFHMPIIASMVMEVIMVI), 189–209 (LINFLLISGSVVASPFISFFF), 243–263 (AFLPLIFYVPVFGLYFYCILT), and 273–293 (FMTVVPCLPAFFDPMLTLYFV).

Belongs to the nematode receptor-like protein srd family.

Its subcellular location is the membrane. This is Serpentine receptor class delta-40 (srd-40) from Caenorhabditis elegans.